The following is a 486-amino-acid chain: Glycogen synthase (486 aa).

Residue Lys20 coordinates ADP-alpha-D-glucose.

Belongs to the glycosyltransferase 1 family. Bacterial/plant glycogen synthase subfamily.

The catalysed reaction is [(1-&gt;4)-alpha-D-glucosyl](n) + ADP-alpha-D-glucose = [(1-&gt;4)-alpha-D-glucosyl](n+1) + ADP + H(+). It participates in glycan biosynthesis; glycogen biosynthesis. Synthesizes alpha-1,4-glucan chains using ADP-glucose. This is Glycogen synthase from Aeromonas salmonicida (strain A449).